Consider the following 182-residue polypeptide: ATP synthase subunit delta (182 aa).

This sequence belongs to the ATPase delta chain family. As to quaternary structure, F-type ATPases have 2 components, F(1) - the catalytic core - and F(0) - the membrane proton channel. F(1) has five subunits: alpha(3), beta(3), gamma(1), delta(1), epsilon(1). CF(0) has four main subunits: a(1), b(1), b'(1) and c(10-14). The alpha and beta chains form an alternating ring which encloses part of the gamma chain. F(1) is attached to F(0) by a central stalk formed by the gamma and epsilon chains, while a peripheral stalk is formed by the delta, b and b' chains.

It localises to the cellular thylakoid membrane. Functionally, f(1)F(0) ATP synthase produces ATP from ADP in the presence of a proton or sodium gradient. F-type ATPases consist of two structural domains, F(1) containing the extramembraneous catalytic core and F(0) containing the membrane proton channel, linked together by a central stalk and a peripheral stalk. During catalysis, ATP synthesis in the catalytic domain of F(1) is coupled via a rotary mechanism of the central stalk subunits to proton translocation. In terms of biological role, this protein is part of the stalk that links CF(0) to CF(1). It either transmits conformational changes from CF(0) to CF(1) or is implicated in proton conduction. In Prochlorococcus marinus (strain MIT 9211), this protein is ATP synthase subunit delta.